The following is a 410-amino-acid chain: Angiopoietin-related protein 4 (410 aa).

The N-terminal stretch at 1–23 (MRCAPTAGAALMLCAATAGLLSA) is a signal peptide. The tract at residues 81–106 (KDPEGSAAPPRAQANLVNPGGGDASP) is disordered. Residues 107–155 (ETLRSLKTQLEAQNSRIQQLFQKVAQQQRHLEKQQLRIQNLQSQMDHLA) are a coiled coil. Asn-184 is a glycosylation site (N-linked (GlcNAc...) asparagine). The region spanning 186-408 (SRLHRLPRDC…ATTILVQPTA (223 aa)) is the Fibrinogen C-terminal domain. 2 cysteine pairs are disulfide-bonded: Cys-195-Cys-223 and Cys-348-Cys-361.

As to quaternary structure, homooligomer; disulfide-linked via Cys residues in the N-terminal part of the protein. The homooligomer undergoes proteolytic processing to release the ANGPTL4 C-terminal chain, which circulates as a monomer. The homooligomer unprocessed form is able to interact with the extracellular matrix. In terms of processing, N-glycosylated. Post-translationally, forms disulfide-linked dimers and tetramers. Cleaved into a smaller N-terminal chain and a larger chain that contains the fibrinogen C-terminal domain; both cleaved and uncleaved forms are detected in the extracellular space. The cleaved form is not present within the cell.

The protein localises to the secreted. It localises to the extracellular space. The protein resides in the extracellular matrix. Functionally, mediates inactivation of the lipoprotein lipase LPL, and thereby plays a role in the regulation of triglyceride clearance from the blood serum and in lipid metabolism. May also play a role in regulating glucose homeostasis and insulin sensitivity. Inhibits proliferation, migration, and tubule formation of endothelial cells and reduces vascular leakage. Upon heterologous expression, inhibits the adhesion of endothelial cell to the extracellular matrix (ECM), and inhibits the reorganization of the actin cytoskeleton, formation of actin stress fibers and focal adhesions in endothelial cells that have adhered to ANGPTL4-containing ECM (in vitro). Depending on context, may modulate tumor-related angiogenesis. In terms of biological role, mediates inactivation of the lipoprotein lipase LPL, and thereby plays an important role in the regulation of triglyceride clearance from the blood serum and in lipid metabolism. Has higher activity in LPL inactivation than the uncleaved protein. In Bos taurus (Bovine), this protein is Angiopoietin-related protein 4 (ANGPTL4).